Here is a 79-residue protein sequence, read N- to C-terminus: Omega-phylotoxin-To1a (79 aa).

The N-terminal stretch at 1–21 (MKKTFCFILILVCIVLKSVNA) is a signal peptide. The propeptide occupies 22–38 (EEEDNFEESSLEMETAR). Disulfide bonds link C39–C59, C46–C63, C58–C78, and C65–C76.

As to expression, expressed by the venom duct.

Its subcellular location is the secreted. Insect-specific toxin that probably acts as an inhibitor of presynaptic insect calcium channels, presumably Cav2 subtype. In vivo, induces immediate paralysis on insects, followed by death when high doses are injected. The polypeptide is Omega-phylotoxin-To1a (Tibellus oblongus (Oblong running crab spider)).